Reading from the N-terminus, the 484-residue chain is Bifunctional protein HldE (484 aa).

The segment at 1 to 320 (MDFSSITVLC…AELNAQDADA (320 aa)) is ribokinase. 195-198 (NARE) provides a ligand contact to ATP. Residue Asp265 is part of the active site. The interval 349 to 484 (FTNGCFDIIH…RIRAAGAADR (136 aa)) is cytidylyltransferase.

In the N-terminal section; belongs to the carbohydrate kinase PfkB family. It in the C-terminal section; belongs to the cytidylyltransferase family. Homodimer.

It carries out the reaction D-glycero-beta-D-manno-heptose 7-phosphate + ATP = D-glycero-beta-D-manno-heptose 1,7-bisphosphate + ADP + H(+). The enzyme catalyses D-glycero-beta-D-manno-heptose 1-phosphate + ATP + H(+) = ADP-D-glycero-beta-D-manno-heptose + diphosphate. It functions in the pathway nucleotide-sugar biosynthesis; ADP-L-glycero-beta-D-manno-heptose biosynthesis; ADP-L-glycero-beta-D-manno-heptose from D-glycero-beta-D-manno-heptose 7-phosphate: step 1/4. Its pathway is nucleotide-sugar biosynthesis; ADP-L-glycero-beta-D-manno-heptose biosynthesis; ADP-L-glycero-beta-D-manno-heptose from D-glycero-beta-D-manno-heptose 7-phosphate: step 3/4. Functionally, catalyzes the phosphorylation of D-glycero-D-manno-heptose 7-phosphate at the C-1 position to selectively form D-glycero-beta-D-manno-heptose-1,7-bisphosphate. In terms of biological role, catalyzes the ADP transfer from ATP to D-glycero-beta-D-manno-heptose 1-phosphate, yielding ADP-D-glycero-beta-D-manno-heptose. This Gluconacetobacter diazotrophicus (strain ATCC 49037 / DSM 5601 / CCUG 37298 / CIP 103539 / LMG 7603 / PAl5) protein is Bifunctional protein HldE.